An 85-amino-acid polypeptide reads, in one-letter code: Beta-insect depressant toxin Lqh-dprIT3g (85 aa).

The N-terminal stretch at 1–21 is a signal peptide; sequence MKLLLLLTISASMLIEGLVNA. One can recognise an LCN-type CS-alpha/beta domain in the interval 22 to 82; it reads DGYIRGGDGC…EWDYETDTCG (61 aa). Cystine bridges form between cysteine 31–cysteine 81, cysteine 35–cysteine 56, cysteine 42–cysteine 63, and cysteine 46–cysteine 65. Position 82 is a glycine amide (glycine 82).

This sequence belongs to the long (4 C-C) scorpion toxin superfamily. Sodium channel inhibitor family. Beta subfamily. Expressed by the venom gland.

Its subcellular location is the secreted. Depressant insect beta-toxins cause a transient contraction paralysis followed by a slow flaccid paralysis. They bind voltage-independently at site-4 of sodium channels (Nav) and block action potentials, primarily by depolarizing the axonal membrane and suppressing the sodium current. This depressant toxin is active only on insects. It is found in a relatively small amount in the venom. The protein is Beta-insect depressant toxin Lqh-dprIT3g of Leiurus hebraeus (Hebrew deathstalker scorpion).